The following is a 312-amino-acid chain: Large ribosomal subunit protein uL10 (312 aa).

Residues alanine 287–aspartate 312 form a disordered region.

The protein belongs to the universal ribosomal protein uL10 family. As to quaternary structure, P0 forms a pentameric complex by interaction with dimers of P1 and P2. In terms of processing, phosphorylated.

Ribosomal protein P0 is the functional equivalent of E.coli protein L10. This chain is Large ribosomal subunit protein uL10, found in Caenorhabditis elegans.